Reading from the N-terminus, the 432-residue chain is ATP-dependent RNA helicase SUB2 (432 aa).

Over residues 1–17 (MSAEGQEELLDYSDSEE) the composition is skewed to acidic residues. The tract at residues 1–35 (MSAEGQEELLDYSDSEEIAVPSNAPEAGADGADKD) is disordered. Residues 48 to 76 (TGFRDFLLKPELLRAIGDCGFEHPSEVQQ) carry the Q motif motif. In terms of domain architecture, Helicase ATP-binding spans 79–254 (IPQSILGTDV…KKFMQNPLEI (176 aa)). Position 92-99 (92-99 (AKSGLGKT)) interacts with ATP. The short motif at 201-204 (DECD) is the DEAD box element. Residues 266 to 427 (GLQQYYLKLD…EFPEEGVDSS (162 aa)) enclose the Helicase C-terminal domain.

Belongs to the DEAD box helicase family. DECD subfamily.

The protein localises to the nucleus. The enzyme catalyses ATP + H2O = ADP + phosphate + H(+). Its function is as follows. ATP-binding RNA helicase involved in transcription elongation and required for the export of mRNA out of the nucleus. SUB2 also plays a role in pre-mRNA splicing and spliceosome assembly. May be involved in rDNA and telomeric silencing, and maintenance of genome integrity. The sequence is that of ATP-dependent RNA helicase SUB2 (SUB2) from Meyerozyma guilliermondii (strain ATCC 6260 / CBS 566 / DSM 6381 / JCM 1539 / NBRC 10279 / NRRL Y-324) (Yeast).